The following is a 121-amino-acid chain: Fluoride-specific ion channel FluC 1 (121 aa).

4 helical membrane-spanning segments follow: residues 3–23 (YVYI…ISFL), 35–55 (VANL…IAFF), 64–84 (AITT…LELI), and 92–112 (FITL…LCYV). Na(+) contacts are provided by Gly-71 and Thr-74.

This sequence belongs to the fluoride channel Fluc/FEX (TC 1.A.43) family.

It localises to the cell membrane. It carries out the reaction fluoride(in) = fluoride(out). With respect to regulation, na(+) is not transported, but it plays an essential structural role and its presence is essential for fluoride channel function. In terms of biological role, fluoride-specific ion channel. Important for reducing fluoride concentration in the cell, thus reducing its toxicity. The polypeptide is Fluoride-specific ion channel FluC 1 (Staphylococcus aureus (strain bovine RF122 / ET3-1)).